The chain runs to 35 residues: Photosystem II reaction center protein T (35 aa).

Residues 3-23 form a helical membrane-spanning segment; it reads SVAYILILTLAIGVLFFAIAF.

This sequence belongs to the PsbT family. PSII is composed of 1 copy each of membrane proteins PsbA, PsbB, PsbC, PsbD, PsbE, PsbF, PsbH, PsbI, PsbJ, PsbK, PsbL, PsbM, PsbT, PsbX, PsbY, PsbZ, Psb30/Ycf12, peripheral proteins PsbO, CyanoQ (PsbQ), PsbU, PsbV and a large number of cofactors. It forms dimeric complexes.

The protein resides in the cellular thylakoid membrane. Found at the monomer-monomer interface of the photosystem II (PS II) dimer, plays a role in assembly and dimerization of PSII. PSII is a light-driven water plastoquinone oxidoreductase, using light energy to abstract electrons from H(2)O, generating a proton gradient subsequently used for ATP formation. The chain is Photosystem II reaction center protein T from Nostoc sp. (strain PCC 7120 / SAG 25.82 / UTEX 2576).